The following is a 227-amino-acid chain: Protein lin-28 (227 aa).

Polar residues predominate over residues 1–17 (MSTVVSEGRNDGNNRYS). Positions 1–27 (MSTVVSEGRNDGNNRYSPQDEVEDRLP) are disordered. One can recognise a CSD domain in the interval 52 to 120 (RYFGSCKWFN…GREAYAVSGE (69 aa)). 2 consecutive CCHC-type zinc fingers follow at residues 143-160 (RCFR…SCPN) and 166-183 (KVCY…ICPE). Residues Cys144, Cys147, His153, Cys158, Cys168, Cys171, His176, and Cys181 each contribute to the Zn(2+) site. The tract at residues 181-227 (CPERRRKHRPEQVAAEEAEAARMAAEKSSPTTSDDDIREKNSNSSDE) is disordered.

The protein belongs to the lin-28 family. Component of a complex at least containing lep-2, lin-28 and the long non-coding RNA lep-5, which mediates the degradation of lin-28. Post-translationally, cleavage by caspase ced-3 during larval development probably induces lin-28 degradation.

It is found in the cytoplasm. Its function is as follows. Heterochronic protein which controls the choice of stage specific cell fates. Regulates the timing of the second larval stage events (L2 events) in the hypodermis. May negatively regulate the larval to adult transition via the suppression of the microRNA (miRNA) let-7 during L3. Through this regulatory role, controls the timing of the sexual maturation of the nervous system. Also has a role in the fox-1-sex-1-mediated determination of sexual fate. Plays a role in governing the developmental timing of male tail tip morphogenesis. Plays a role in controlling the seam cell number during larval stages. Plays a role in vulval development. The polypeptide is Protein lin-28 (Caenorhabditis elegans).